Here is a 331-residue protein sequence, read N- to C-terminus: C4-dicarboxylate-binding periplasmic protein DctP (331 aa).

Positions 1–23 (MLKHTAKALVCALSLTVAGIVQA) are cleaved as a signal peptide.

It belongs to the bacterial solute-binding protein 7 family. The complex comprises the extracytoplasmic solute receptor protein DctP, and the two transmembrane proteins DctQ and DctM.

It is found in the periplasm. Its function is as follows. Part of the tripartite ATP-independent periplasmic (TRAP) transport system DctPQM involved in C4-dicarboxylates uptake. This is C4-dicarboxylate-binding periplasmic protein DctP from Pseudomonas aeruginosa (strain ATCC 15692 / DSM 22644 / CIP 104116 / JCM 14847 / LMG 12228 / 1C / PRS 101 / PAO1).